The sequence spans 396 residues: L-lactate dehydrogenase (396 aa).

Positions 1–380 constitute an FMN hydroxy acid dehydrogenase domain; the sequence is MIISAASDYR…SGDSLVQELG (380 aa). Residue Tyr24 participates in substrate binding. 2 residues coordinate FMN: Ser106 and Gln127. Tyr129 provides a ligand contact to substrate. Thr155 contributes to the FMN binding site. Arg164 is a substrate binding site. FMN is bound at residue Lys251. Residue His275 is the Proton acceptor of the active site. Arg278 serves as a coordination point for substrate. Residue 306–330 participates in FMN binding; sequence DSGIRNGLDVVRMIALGADTVLLGR.

It belongs to the FMN-dependent alpha-hydroxy acid dehydrogenase family. Requires FMN as cofactor.

The protein resides in the cell inner membrane. The catalysed reaction is (S)-lactate + A = pyruvate + AH2. Functionally, catalyzes the conversion of L-lactate to pyruvate. Is coupled to the respiratory chain. The protein is L-lactate dehydrogenase of Salmonella typhimurium (strain LT2 / SGSC1412 / ATCC 700720).